Consider the following 364-residue polypeptide: Probable endopolygalacturonase B (364 aa).

A signal peptide spans Met1–Ala20. Residues Ala21 to Arg29 constitute a propeptide that is removed on maturation. The cysteines at positions 32 and 47 are disulfide-linked. Asn138 and Asn141 each carry an N-linked (GlcNAc...) asparagine glycan. 6 PbH1 repeats span residues Ser159–Ser188, Ser189–Ser210, Gly211–Ser231, Val240–Thr261, Val269–Gln291, and Thr303–Ala324. Catalysis depends on Asp203, which acts as the Proton donor. The cysteines at positions 205 and 221 are disulfide-linked. Residue His225 is part of the active site. Cys331 and Cys336 are disulfide-bonded. An N-linked (GlcNAc...) asparagine glycan is attached at Asn338. A disulfide bridge connects residues Cys355 and Cys364.

The protein belongs to the glycosyl hydrolase 28 family.

It is found in the secreted. It catalyses the reaction (1,4-alpha-D-galacturonosyl)n+m + H2O = (1,4-alpha-D-galacturonosyl)n + (1,4-alpha-D-galacturonosyl)m.. In terms of biological role, involved in maceration and soft-rotting of plant tissue. Hydrolyzes the 1,4-alpha glycosidic bonds of de-esterified pectate in the smooth region of the plant cell wall. This Aspergillus fumigatus (strain CBS 144.89 / FGSC A1163 / CEA10) (Neosartorya fumigata) protein is Probable endopolygalacturonase B (pgaB).